The chain runs to 209 residues: MASGQGPGPPKVGCDESPSPSEQQVAQDTEEVFRSYVFYLHQQEQETQGAAAPANPEMDNLPLEPNSILGQVGRQLALIGDDINRRYDTEFQNLLEQLQPTAGNAYELFTKIASSLFKSGISWGRVVALLGFGYRLALYVYQRGLTGFLGQVTCFLADIILHHYIARWIAQRGGWVAALNFRRDPILTVMVIFGVVLLGQFVVHRFFRS.

A disordered region spans residues Met-1 to Asp-28. The residue at position 2 (Ala-2) is an N-acetylalanine. The span at Pro-18 to Gln-27 shows a compositional bias: polar residues. The BH3 signature appears at Val-72–Arg-86. A BH1 motif is present at residues Ser-115–Tyr-134. Residues Asp-158 and His-162 each coordinate Zn(2+). Positions Arg-167–Arg-182 match the BH2 motif. The chain crosses the membrane as a helical span at residues Ile-186 to Val-203.

The protein belongs to the Bcl-2 family. Homodimer. Formation of the homodimer is zinc-dependent. Forms heterodimers with BCL2 and BCL2L1 isoform Bcl-X(L). Forms heterooligomers with BAX. Interacts with BCL2A1. Interacts withRTL10/BOP. Interacts with VDAC1. Interacts with GIMAP3/IAN4 and GIMAP5/IAN5. In terms of assembly, (Microbial infection) Interacts with gamma-herpesvirus 68 protein vBCL2. As to expression, widely expressed.

The protein resides in the mitochondrion outer membrane. Its function is as follows. In the presence of an appropriate stimulus, accelerates programmed cell death by binding to, and antagonizing the anti-apoptotic action of BCL2. The polypeptide is Bcl-2 homologous antagonist/killer (Bak1) (Mus musculus (Mouse)).